Here is a 191-residue protein sequence, read N- to C-terminus: Imidazoleglycerol-phosphate dehydratase (191 aa).

The protein belongs to the imidazoleglycerol-phosphate dehydratase family.

It localises to the cytoplasm. It carries out the reaction D-erythro-1-(imidazol-4-yl)glycerol 3-phosphate = 3-(imidazol-4-yl)-2-oxopropyl phosphate + H2O. It participates in amino-acid biosynthesis; L-histidine biosynthesis; L-histidine from 5-phospho-alpha-D-ribose 1-diphosphate: step 6/9. The sequence is that of Imidazoleglycerol-phosphate dehydratase from Methanosarcina barkeri (strain Fusaro / DSM 804).